The following is a 581-amino-acid chain: Pyridine nucleotide-disulfide oxidoreductase domain-containing protein 2 (581 aa).

Residue 38–71 coordinates FAD; it reads VVIGAGHNGLVAAAYLQRLGVNTAVFERRHVIGG.

This sequence belongs to the carotenoid/retinoid oxidoreductase family. Interacts with COX5B; this interaction may contribute to localize PYROXD2 to the inner face of the inner mitochondrial membrane.

The protein localises to the mitochondrion matrix. Probable oxidoreductase that may play a role as regulator of mitochondrial function. The chain is Pyridine nucleotide-disulfide oxidoreductase domain-containing protein 2 from Homo sapiens (Human).